A 342-amino-acid polypeptide reads, in one-letter code: uncharacterized protein (342 aa).

It belongs to the proline racemase family.

This is an uncharacterized protein from Brucella canis (strain ATCC 23365 / NCTC 10854 / RM-666).